Here is a 459-residue protein sequence, read N- to C-terminus: Cysteine--tRNA ligase (459 aa).

Zn(2+) is bound at residue cysteine 27. Residues valine 29–histidine 39 carry the 'HIGH' region motif. Positions 208, 233, and 237 each coordinate Zn(2+). Residues lysine 265–serine 269 carry the 'KMSKS' region motif. An ATP-binding site is contributed by lysine 268.

Belongs to the class-I aminoacyl-tRNA synthetase family. As to quaternary structure, monomer. Zn(2+) serves as cofactor.

The protein localises to the cytoplasm. It carries out the reaction tRNA(Cys) + L-cysteine + ATP = L-cysteinyl-tRNA(Cys) + AMP + diphosphate. This chain is Cysteine--tRNA ligase, found in Francisella tularensis subsp. novicida (strain U112).